The chain runs to 782 residues: MRQKTLDVLEFEKIKSLVANETISDLGLEKVNQMMPATNFETVVFQMEETDEIAQIYNKHRLPSLSGLSKVSAFIHRADIGGVLNVSELNLIKRLIQVQNQFKTFYNQLVEEDEGVKYPILDDKMNQLPVLTDLFQQINETCDTYDLYDNASYELQGIRSKISSTNQRIRQNLDRIVKSQANQKKLSDAIVTVRNERNVIPVKAEYRQDFNGIVHDQSASGQTLYIEPSSVVEMNNQISRLRHDEAIEKERILTQLTGYVAADKDALLVAEQVMGQLDFLIAKARYSRSIKGTKPIFKEDRTVYLPKAYHPLLNRETVVANTIEFMEDIETVIITGPNTGGKTVTLKTLGLIIVMAQSGLLIPTLDGSQLSVFKNVYCDIGDEQSIEQSLSTFSSHMTNIVEILKHADKHSLVLFDELGAGTDPSEGAALAMSILDHVRKIGSLVMATTHYPELKAYSYNREGVMNASVEFDVDTLSPTYKLLMGVPGRSNAFDISKKLGLSLNIINKAKTMIGTDEKEINEMIESLERNYKRVETQRLELDRLVKEAEQVHDDLSKQYQQFQNYEKSLIEEAKEKANQKIKAATKEADDIIKDLRQLREQKGADVKEHELIDKKKRLDDHYEAKSIKQNVQKQKYDKIVAGDEVKVLSYGQKGEVLEIVNDEEAIVQMGIIKMKLPIEDLEKKQKEKVKPTKMVTRQNRQTIKTELDLRGYRYEDALIELDQYLDQAVLSNYEQVYIIHGKGTGALQKGVQQHLKKHKSVSDFRGGMPSEGGFGVTVATLK.

ATP is bound at residue 336-343; sequence GPNTGGKT. The Smr domain maps to 707–782; the sequence is LDLRGYRYED…GFGVTVATLK (76 aa).

The protein belongs to the DNA mismatch repair MutS family. MutS2 subfamily. In terms of assembly, homodimer. Binds to stalled ribosomes, contacting rRNA.

Endonuclease that is involved in the suppression of homologous recombination and thus may have a key role in the control of bacterial genetic diversity. In terms of biological role, acts as a ribosome collision sensor, splitting the ribosome into its 2 subunits. Detects stalled/collided 70S ribosomes which it binds and splits by an ATP-hydrolysis driven conformational change. Acts upstream of the ribosome quality control system (RQC), a ribosome-associated complex that mediates the extraction of incompletely synthesized nascent chains from stalled ribosomes and their subsequent degradation. Probably generates substrates for RQC. The polypeptide is Endonuclease MutS2 (Staphylococcus aureus (strain COL)).